We begin with the raw amino-acid sequence, 161 residues long: NADH-quinone oxidoreductase subunit I (161 aa).

4Fe-4S ferredoxin-type domains are found at residues 52 to 82 and 92 to 121; these read LRRY…IESE and KRYD…ETRV. Positions 62, 65, 68, 72, 101, 104, 107, and 111 each coordinate [4Fe-4S] cluster.

It belongs to the complex I 23 kDa subunit family. In terms of assembly, NDH-1 is composed of 14 different subunits. Subunits NuoA, H, J, K, L, M, N constitute the membrane sector of the complex. [4Fe-4S] cluster serves as cofactor.

The protein localises to the cell inner membrane. The enzyme catalyses a quinone + NADH + 5 H(+)(in) = a quinol + NAD(+) + 4 H(+)(out). Its function is as follows. NDH-1 shuttles electrons from NADH, via FMN and iron-sulfur (Fe-S) centers, to quinones in the respiratory chain. The immediate electron acceptor for the enzyme in this species is believed to be ubiquinone. Couples the redox reaction to proton translocation (for every two electrons transferred, four hydrogen ions are translocated across the cytoplasmic membrane), and thus conserves the redox energy in a proton gradient. In Aromatoleum aromaticum (strain DSM 19018 / LMG 30748 / EbN1) (Azoarcus sp. (strain EbN1)), this protein is NADH-quinone oxidoreductase subunit I.